We begin with the raw amino-acid sequence, 274 residues long: tRNA-cytidine(32) 2-sulfurtransferase (274 aa).

The short motif at S40 to S45 is the PP-loop motif element. Positions 115, 118, and 206 each coordinate [4Fe-4S] cluster.

This sequence belongs to the TtcA family. Homodimer. Mg(2+) serves as cofactor. Requires [4Fe-4S] cluster as cofactor.

Its subcellular location is the cytoplasm. The enzyme catalyses cytidine(32) in tRNA + S-sulfanyl-L-cysteinyl-[cysteine desulfurase] + AH2 + ATP = 2-thiocytidine(32) in tRNA + L-cysteinyl-[cysteine desulfurase] + A + AMP + diphosphate + H(+). Its pathway is tRNA modification. Catalyzes the ATP-dependent 2-thiolation of cytidine in position 32 of tRNA, to form 2-thiocytidine (s(2)C32). The sulfur atoms are provided by the cysteine/cysteine desulfurase (IscS) system. This Pseudomonas putida (strain GB-1) protein is tRNA-cytidine(32) 2-sulfurtransferase.